The sequence spans 299 residues: MLPDIQSTKGDGEGESLSWVGMEQIDLPIDIAGRPVSAKVNAGINLLSSPEAEKGIHMSRLYLLLDELTQGEITPALLQHVLKAFLVSHQGRSDEASIEISGDLLLSRKSLNSNHSGWKAYPLTLSAELRQSFTVTLKVGIPYSSTCPASAALSRHVAGLQFSKDFGNRIDRLPAAEIADWLVEKGMPATPHSQRSWAWVSIRLNPEAKSLPVIELIDYAEVALGTAVQTVVKRSDEQAFAVANGQNLMFCEDAARRLNNVFRCAPFCEAFDIRVEHQESLHPHNAVARIHWKGSKNVT.

The protein belongs to the GTP cyclohydrolase IV family.

It carries out the reaction GTP + H2O = 7,8-dihydroneopterin 3'-triphosphate + formate + H(+). It functions in the pathway cofactor biosynthesis; 7,8-dihydroneopterin triphosphate biosynthesis; 7,8-dihydroneopterin triphosphate from GTP: step 1/1. In terms of biological role, converts GTP to 7,8-dihydroneopterin triphosphate. This chain is GTP cyclohydrolase FolE2, found in Citrobacter koseri (strain ATCC BAA-895 / CDC 4225-83 / SGSC4696).